The sequence spans 261 residues: Auxin-responsive protein IAA10 (261 aa).

The disordered stretch occupies residues 1–43 (MNGLQEVCSSSGSVMIGLPAEEDENAAHSSEDSSCPDESVSET). Positions 45 to 49 (LDLAL) match the EAR-like (transcriptional repression) motif. A disordered region spans residues 62 to 90 (LSSSSSSLTRESGTKRSADSSPAAASNAT). Over residues 80 to 89 (DSSPAAASNA) the composition is skewed to low complexity. In terms of domain architecture, PB1 spans 151–253 (SMLVKVTMDG…SVTRLRIMKT (103 aa)).

The protein belongs to the Aux/IAA family. Homodimers and heterodimers. In terms of tissue distribution, preferentially expressed in vegetative organs.

It localises to the nucleus. In terms of biological role, aux/IAA proteins are short-lived transcriptional factors that function as repressors of early auxin response genes at low auxin concentrations. Repression is thought to result from the interaction with auxin response factors (ARFs), proteins that bind to the auxin-responsive promoter element (AuxRE). Formation of heterodimers with ARF proteins may alter their ability to modulate early auxin response genes expression. In Arabidopsis thaliana (Mouse-ear cress), this protein is Auxin-responsive protein IAA10 (IAA10).